We begin with the raw amino-acid sequence, 236 residues long: Leucyl/phenylalanyl-tRNA--protein transferase (236 aa).

This sequence belongs to the L/F-transferase family.

It localises to the cytoplasm. The enzyme catalyses N-terminal L-lysyl-[protein] + L-leucyl-tRNA(Leu) = N-terminal L-leucyl-L-lysyl-[protein] + tRNA(Leu) + H(+). It catalyses the reaction N-terminal L-arginyl-[protein] + L-leucyl-tRNA(Leu) = N-terminal L-leucyl-L-arginyl-[protein] + tRNA(Leu) + H(+). It carries out the reaction L-phenylalanyl-tRNA(Phe) + an N-terminal L-alpha-aminoacyl-[protein] = an N-terminal L-phenylalanyl-L-alpha-aminoacyl-[protein] + tRNA(Phe). Functionally, functions in the N-end rule pathway of protein degradation where it conjugates Leu, Phe and, less efficiently, Met from aminoacyl-tRNAs to the N-termini of proteins containing an N-terminal arginine or lysine. This chain is Leucyl/phenylalanyl-tRNA--protein transferase, found in Vibrio atlanticus (strain LGP32) (Vibrio splendidus (strain Mel32)).